Here is a 316-residue protein sequence, read N- to C-terminus: tRNA dimethylallyltransferase (316 aa).

17–24 (GPTASGKT) is a binding site for ATP. 19–24 (TASGKT) serves as a coordination point for substrate. Interaction with substrate tRNA regions lie at residues 42–45 (DSAL), 166–170 (QRLSR), and 247–252 (RCVGYR).

It belongs to the IPP transferase family. In terms of assembly, monomer. It depends on Mg(2+) as a cofactor.

It carries out the reaction adenosine(37) in tRNA + dimethylallyl diphosphate = N(6)-dimethylallyladenosine(37) in tRNA + diphosphate. Its function is as follows. Catalyzes the transfer of a dimethylallyl group onto the adenine at position 37 in tRNAs that read codons beginning with uridine, leading to the formation of N6-(dimethylallyl)adenosine (i(6)A). In Salmonella arizonae (strain ATCC BAA-731 / CDC346-86 / RSK2980), this protein is tRNA dimethylallyltransferase.